The primary structure comprises 416 residues: Gamma-glutamyl phosphate reductase (416 aa).

Belongs to the gamma-glutamyl phosphate reductase family.

The protein localises to the cytoplasm. It catalyses the reaction L-glutamate 5-semialdehyde + phosphate + NADP(+) = L-glutamyl 5-phosphate + NADPH + H(+). Its pathway is amino-acid biosynthesis; L-proline biosynthesis; L-glutamate 5-semialdehyde from L-glutamate: step 2/2. Its function is as follows. Catalyzes the NADPH-dependent reduction of L-glutamate 5-phosphate into L-glutamate 5-semialdehyde and phosphate. The product spontaneously undergoes cyclization to form 1-pyrroline-5-carboxylate. The protein is Gamma-glutamyl phosphate reductase of Salmonella newport (strain SL254).